The sequence spans 190 residues: uncharacterized protein (190 aa).

Residues 1–55 (MSRLRRFNRKILSLSSDYTHDGESDQEDVSILPLDTEEQEELIQKFETNAHITNK) are Cytoplasmic-facing. A helical transmembrane segment spans residues 56 to 76 (LYINLLSILYLLYGGLLMILV). Topologically, residues 77-80 (RKSR) are extracellular. The helical transmembrane segment at 81-101 (GYIKLALLAGANSLICSCITL) threads the bilayer. The Cytoplasmic segment spans residues 102–123 (RYDIVNDYLLFKKFKLRVSNFS). The helical transmembrane segment at 124-144 (INIINIILLVLMAWISFNHVV) threads the bilayer. The Extracellular portion of the chain corresponds to 145–149 (EDKKT). A helical membrane pass occupies residues 150-170 (VLCLQVPMFLFWVAVLVKRWA). Topologically, residues 171–190 (RNIEDEIADLRCLKYKYKNA) are cytoplasmic.

Its subcellular location is the membrane. This is an uncharacterized protein from Saccharomyces cerevisiae (strain ATCC 204508 / S288c) (Baker's yeast).